The sequence spans 154 residues: Snaclec lebecin subunit beta (154 aa).

An N-terminal signal peptide occupies residues 1 to 23 (MGRIIFVSFGLLVVFLSLSGTGA). 3 disulfide bridges follow: Cys-25-Cys-36, Cys-53-Cys-150, and Cys-125-Cys-142. The C-type lectin domain maps to 32 to 151 (DEEHCYYVFF…CGDDYPFVCK (120 aa)). Asn-139 carries an N-linked (GlcNAc...) asparagine glycan.

As to quaternary structure, heterodimer with the alpha subunit (AC W5XDM0); disulfide-linked. Expressed by the venom gland.

The protein localises to the secreted. Its function is as follows. Inhibits human breast cancer cells (MDA-MB231) migration and proliferation, as well as their adhesion to fibrinogen and fibronectin. This inhibition may be due to the binding to receptors of the integrin family, probably alpha-v/beta-3 (ITGAV/ITGB3) (40% inhibition of cell adhesion) and alpha-5/beta-1 (ITGA5/ITGB1) (by comparison with lebectin). The chain is Snaclec lebecin subunit beta from Macrovipera lebetinus (Levantine viper).